A 61-amino-acid chain; its full sequence is Large ribosomal subunit protein uL30 (61 aa).

Belongs to the universal ribosomal protein uL30 family. Part of the 50S ribosomal subunit.

The chain is Large ribosomal subunit protein uL30 from Corynebacterium diphtheriae (strain ATCC 700971 / NCTC 13129 / Biotype gravis).